A 357-amino-acid polypeptide reads, in one-letter code: 3-isopropylmalate dehydrogenase (357 aa).

Substrate is bound by residues R97, R107, R135, and D224. 3 residues coordinate Mg(2+): D224, D248, and D252. 282–294 contacts NAD(+); that stretch reads GSAPDIAGQDLAN.

Belongs to the isocitrate and isopropylmalate dehydrogenases family. LeuB type 1 subfamily. In terms of assembly, homodimer. Requires Mg(2+) as cofactor. Mn(2+) is required as a cofactor.

Its subcellular location is the cytoplasm. The catalysed reaction is (2R,3S)-3-isopropylmalate + NAD(+) = 4-methyl-2-oxopentanoate + CO2 + NADH. Its pathway is amino-acid biosynthesis; L-leucine biosynthesis; L-leucine from 3-methyl-2-oxobutanoate: step 3/4. Functionally, catalyzes the oxidation of 3-carboxy-2-hydroxy-4-methylpentanoate (3-isopropylmalate) to 3-carboxy-4-methyl-2-oxopentanoate. The product decarboxylates to 4-methyl-2 oxopentanoate. In Prochlorococcus marinus (strain MIT 9313), this protein is 3-isopropylmalate dehydrogenase.